The chain runs to 45 residues: Endo-1,4-beta-xylanase Xyn10A (45 aa).

The protein belongs to the glycosyl hydrolase 10 (cellulase F) family.

The protein localises to the secreted. Its subcellular location is the extracellular space. It carries out the reaction Endohydrolysis of (1-&gt;4)-beta-D-xylosidic linkages in xylans.. It catalyses the reaction Endohydrolysis of (1-&gt;4)-beta-D-glucosidic linkages in cellulose, lichenin and cereal beta-D-glucans.. The protein operates within glycan degradation; xylan degradation. Its function is as follows. Has xylanase, avicelase and cellobiohydrolase activity. The polypeptide is Endo-1,4-beta-xylanase Xyn10A (Gloeophyllum trabeum (Brown rot fungus)).